Here is a 511-residue protein sequence, read N- to C-terminus: Lysine--tRNA ligase (511 aa).

A disordered region spans residues 1–21; sequence MHTEKDPNKNTPEQQTPISLN. Polar residues predominate over residues 9 to 21; the sequence is KNTPEQQTPISLN. The Mg(2+) site is built by Glu-422 and Glu-429.

Belongs to the class-II aminoacyl-tRNA synthetase family. In terms of assembly, homodimer. Mg(2+) serves as cofactor.

The protein localises to the cytoplasm. It catalyses the reaction tRNA(Lys) + L-lysine + ATP = L-lysyl-tRNA(Lys) + AMP + diphosphate. In Pelodictyon phaeoclathratiforme (strain DSM 5477 / BU-1), this protein is Lysine--tRNA ligase.